The following is a 276-amino-acid chain: Non-homologous end joining protein Ku (276 aa).

Residues I11 to L177 form the Ku domain. A disordered region spans residues Q256–S276.

Belongs to the prokaryotic Ku family. Homodimer. Interacts with LigD.

Functionally, with LigD forms a non-homologous end joining (NHEJ) DNA repair enzyme, which repairs dsDNA breaks with reduced fidelity. Binds linear dsDNA with 5'- and 3'- overhangs but not closed circular dsDNA nor ssDNA. Recruits and stimulates the ligase activity of LigD. This Heliobacterium modesticaldum (strain ATCC 51547 / Ice1) protein is Non-homologous end joining protein Ku.